The following is a 630-amino-acid chain: Putative polypeptide N-acetylgalactosaminyltransferase 10 (630 aa).

At 1-6 (MNVDLR) the chain is on the cytoplasmic side. Residues 7 to 26 (LIVRLLLAILLTSLVTTILM) form a helical; Signal-anchor for type II membrane protein membrane-spanning segment. Residues 27–630 (GKQIHRRLVK…APYDPQREPH (604 aa)) are Lumenal-facing. 4 N-linked (GlcNAc...) asparagine glycosylation sites follow: asparagine 72, asparagine 84, asparagine 146, and asparagine 168. 3 disulfides stabilise this stretch: cysteine 157–cysteine 386, cysteine 377–cysteine 456, and cysteine 496–cysteine 513. A catalytic subdomain A region spans residues 166 to 277 (LPNVTVIIAF…TNWLPPLLEP (112 aa)). The substrate site is built by aspartate 207 and arginine 238. Mn(2+) is bound at residue aspartate 261. Serine 262 is a binding site for substrate. Histidine 263 provides a ligand contact to Mn(2+). Residues 333 to 394 (PYRTPVLSGA…PCARVGHIGK (62 aa)) form a catalytic subdomain B region. Residue tryptophan 363 participates in substrate binding. Histidine 391 contacts Mn(2+). The region spanning 483–618 (FSGVIESVAF…NQLEQQWKVG (136 aa)) is the Ricin B-type lectin domain. N-linked (GlcNAc...) asparagine glycosylation occurs at asparagine 525. Intrachain disulfides connect cysteine 543/cysteine 559 and cysteine 586/cysteine 606.

Belongs to the glycosyltransferase 2 family. GalNAc-T subfamily. The cofactor is Mn(2+). As to expression, during embryonic stages 9-11, weakly expressed in the mesoderm. During embryonic stages 12-13, very weak expression is observed in the somatic mesoderm region. No expression detected from stage 14-15. During embryonic stages 16-17, expressed in the epidermis and the antennomaxillary complex. In third instar larvae, expressed ubiquitously in wing, eye-antennal, leg and haltere imaginal disks.

Its subcellular location is the golgi apparatus membrane. The catalysed reaction is L-seryl-[protein] + UDP-N-acetyl-alpha-D-galactosamine = a 3-O-[N-acetyl-alpha-D-galactosaminyl]-L-seryl-[protein] + UDP + H(+). The enzyme catalyses L-threonyl-[protein] + UDP-N-acetyl-alpha-D-galactosamine = a 3-O-[N-acetyl-alpha-D-galactosaminyl]-L-threonyl-[protein] + UDP + H(+). Its pathway is protein modification; protein glycosylation. Functionally, may catalyze the initial reaction in O-linked oligosaccharide biosynthesis, the transfer of an N-acetyl-D-galactosamine residue to a serine or threonine residue on the protein receptor. The polypeptide is Putative polypeptide N-acetylgalactosaminyltransferase 10 (pgant10) (Drosophila melanogaster (Fruit fly)).